A 248-amino-acid polypeptide reads, in one-letter code: Granulin (248 aa).

This sequence belongs to the polyhedrin family.

Its function is as follows. Component of the virus occlusion bodies, which are large proteinaceous structures, that protect the virus from the outside environment for extended periods until they are ingested by insect larvae. This is Granulin from Zygaenidae (burnets).